A 464-amino-acid chain; its full sequence is 2-oxoadipate dioxygenase/decarboxylase (464 aa).

Positions 70, 74, and 226 each coordinate 2-oxoadipate. Histidine 70 is a binding site for Fe(2+). Fe(2+) contacts are provided by histidine 226 and glutamate 294. 2-oxoadipate is bound at residue valine 402.

The protein belongs to the 2-oxoadipate dioxygenase/decarboxylase family. Fe(2+) serves as cofactor.

It catalyses the reaction 2-oxoadipate + O2 = (R)-2-hydroxyglutarate + CO2. It functions in the pathway amino-acid degradation. Its activity is regulated as follows. Inhibited by EDTA. Functionally, catalyzes the decarboxylation and hydroxylation of 2-oxoadipate (2OA) to form D-2-hydroxyglutarate (D-2-HGA). Is specific for 2-oxoadipate. Is involved in a D-lysine catabolic pathway. The chain is 2-oxoadipate dioxygenase/decarboxylase from Pseudomonas putida (strain ATCC 47054 / DSM 6125 / CFBP 8728 / NCIMB 11950 / KT2440).